The following is a 343-amino-acid chain: 7-epi-alpha-eudesmol synthase ((2E,6E)-farnesyl diphosphate cyclizing) (343 aa).

Residues Asp-80 and Asp-84 each coordinate Mg(2+). Positions 80-84 (DDQFD) match the DDXXD motif motif. Arg-177 serves as a coordination point for substrate. Mg(2+)-binding residues include Asn-223 and Ser-227. Arg-230 contributes to the substrate binding site. Glu-231 is a binding site for Mg(2+). 317–318 (RY) contributes to the substrate binding site.

Belongs to the terpene synthase family. It depends on Mg(2+) as a cofactor.

It carries out the reaction (2E,6E)-farnesyl diphosphate + H2O = 7-epi-alpha-eudesmol + diphosphate. It functions in the pathway secondary metabolite biosynthesis; terpenoid biosynthesis. Catalyzes the conversion of (2E,6E)-farnesyl diphosphate (FPP) to yield the bicyclic sesquiterpenol 7-epi-alpha-eudesmol via a 1,10-cyclization, which requires the abstraction of the pyrophosphate from FPP to yield the (E,E)-germacradienyl cation. The only accepted substrate is (2E,6E)-farnesyl diphosphate (FPP). The polypeptide is 7-epi-alpha-eudesmol synthase ((2E,6E)-farnesyl diphosphate cyclizing) (Streptomyces viridochromogenes (strain DSM 40736 / JCM 4977 / BCRC 1201 / Tue 494)).